Here is a 322-residue protein sequence, read N- to C-terminus: Protein mono-ADP-ribosyltransferase PARP16 (322 aa).

At 1–287 (MQLSNRAAAR…RASSQLSWLS (287 aa)) the chain is on the cytoplasmic side. Positions 5 to 91 (NRAAAREAAS…AWDLVSWILS (87 aa)) constitute a PARP alpha-helical domain. In terms of domain architecture, PARP catalytic spans 94 to 279 (ILTIHSAKKA…VYSQKQPKRA (186 aa)). NAD(+) contacts are provided by H152, Y182, and Y254. Residues 288 to 308 (SHWFVIMMSLYLLLLLIVSVT) form a helical membrane-spanning segment. Residues 309-322 (NSSVFHHFWNRVKR) lie on the Lumenal side of the membrane.

The protein belongs to the ARTD/PARP family. In terms of assembly, interacts with KPNB1. In terms of processing, auto-mono-ADP-ribosylated.

The protein localises to the endoplasmic reticulum membrane. It carries out the reaction L-aspartyl-[protein] + NAD(+) = 4-O-(ADP-D-ribosyl)-L-aspartyl-[protein] + nicotinamide. It catalyses the reaction L-lysyl-[protein] + NAD(+) = N(6)-(ADP-D-ribosyl)-L-lysyl-[protein] + nicotinamide + H(+). The catalysed reaction is L-glutamyl-[protein] + NAD(+) = 5-O-(ADP-D-ribosyl)-L-glutamyl-[protein] + nicotinamide. Its activity is regulated as follows. In absence of activation signal, PARP16 is autoinhibited by the PARP alpha-helical domain (also named HD region), which prevents effective NAD(+)-binding. Activity is highly stimulated by signals, which unfold the PARP alpha-helical domain, relieving autoinhibition. Intracellular mono-ADP-ribosyltransferase that plays a role in different processes, such as protein translation and unfolded protein response (UPR), through the mono-ADP-ribosylation of proteins involved in those processes. Acts as an inhibitor of protein translation by catalyzing mono-ADP-ribosylation of ribosomal subunits, such as RPL14 and RPS6, thereby inhibiting polysome assembly and mRNA loading. Mono-ADP-ribosylation of ribosomal subunits is promoted by NMNAT2. Involved in the unfolded protein response (UPR) by ADP-ribosylating and activating EIF2AK3 and ERN1, two important UPR effectors. May also mediate mono-ADP-ribosylation of karyopherin KPNB1 a nuclear import factor. May not modify proteins on arginine or cysteine residues compared to other mono-ADP-ribosyltransferases. The sequence is that of Protein mono-ADP-ribosyltransferase PARP16 from Mus musculus (Mouse).